Here is a 259-residue protein sequence, read N- to C-terminus: Phosphate import ATP-binding protein PstB (259 aa).

One can recognise an ABC transporter domain in the interval 2–248 (GQRIDVNHEN…ITMFNNPQNE (247 aa)). Residue 37–44 (GPSGCGKS) coordinates ATP.

This sequence belongs to the ABC transporter superfamily. Phosphate importer (TC 3.A.1.7) family. In terms of assembly, the complex is composed of two ATP-binding proteins (PstB), two transmembrane proteins (PstC and PstA) and a solute-binding protein (PstS).

Its subcellular location is the cell membrane. It catalyses the reaction phosphate(out) + ATP + H2O = ADP + 2 phosphate(in) + H(+). In terms of biological role, part of the ABC transporter complex PstSACB involved in phosphate import. Responsible for energy coupling to the transport system. The protein is Phosphate import ATP-binding protein PstB of Bifidobacterium longum (strain NCC 2705).